We begin with the raw amino-acid sequence, 89 residues long: Small ribosomal subunit protein uS15 (89 aa).

Belongs to the universal ribosomal protein uS15 family. In terms of assembly, part of the 30S ribosomal subunit. Forms a bridge to the 50S subunit in the 70S ribosome, contacting the 23S rRNA.

In terms of biological role, one of the primary rRNA binding proteins, it binds directly to 16S rRNA where it helps nucleate assembly of the platform of the 30S subunit by binding and bridging several RNA helices of the 16S rRNA. Its function is as follows. Forms an intersubunit bridge (bridge B4) with the 23S rRNA of the 50S subunit in the ribosome. The polypeptide is Small ribosomal subunit protein uS15 (Chlorobium phaeovibrioides (strain DSM 265 / 1930) (Prosthecochloris vibrioformis (strain DSM 265))).